The primary structure comprises 122 residues: Ribonuclease pancreatic (122 aa).

The substrate site is built by K6 and R9. H11 acts as the Proton acceptor in catalysis. 4 disulfide bridges follow: C25–C83, C39–C94, C57–C109, and C64–C71. Substrate is bound by residues 40–44, K65, and R84; that span reads KPVNT. H117 acts as the Proton donor in catalysis.

It belongs to the pancreatic ribonuclease family. As to quaternary structure, monomer. Interacts with and forms tight 1:1 complexes with RNH1. Dimerization of two such complexes may occur. Interaction with RNH1 inhibits this protein. Pancreas.

The protein resides in the secreted. The catalysed reaction is an [RNA] containing cytidine + H2O = an [RNA]-3'-cytidine-3'-phosphate + a 5'-hydroxy-ribonucleotide-3'-[RNA].. It carries out the reaction an [RNA] containing uridine + H2O = an [RNA]-3'-uridine-3'-phosphate + a 5'-hydroxy-ribonucleotide-3'-[RNA].. In terms of biological role, endonuclease that catalyzes the cleavage of RNA on the 3' side of pyrimidine nucleotides. Acts on single-stranded and double-stranded RNA. This is Ribonuclease pancreatic from Notamacropus rufogriseus (Red-necked wallaby).